We begin with the raw amino-acid sequence, 433 residues long: Zinc finger and SCAN domain-containing protein 4 (433 aa).

One can recognise an SCAN box domain in the interval 44-126 (RMVLNSFQDS…RFIEDLTDDS (83 aa)). 3 stretches are compositionally biased toward polar residues: residues 165-185 (TTRE…SLET), 195-210 (GWNS…ENIT), and 277-299 (QPEQ…STCE). 2 disordered regions span residues 165–210 (TTRE…ENIT) and 275–301 (ISQP…CEVH). 4 consecutive C2H2-type zinc fingers follow at residues 312 to 334 (YKCE…QRRH), 340 to 362 (FVCP…QIIH), 368 to 390 (FTCS…ERIH), and 396 to 418 (YTCP…MRTH).

It localises to the nucleus. It is found in the chromosome. Its subcellular location is the telomere. Embryonic stem (ES) cell-specific transcription factor required to regulate ES cell pluripotency. Binds telomeres and plays a key role in genomic stability in ES cells by regulating telomere elongation. Acts as an activator of spontaneous telomere sister chromatid exchange (T-SCE) and telomere elongation in undifferentiated ES cells. The protein is Zinc finger and SCAN domain-containing protein 4 (ZSCAN4) of Homo sapiens (Human).